Here is a 250-residue protein sequence, read N- to C-terminus: Ubiquinone/menaquinone biosynthesis C-methyltransferase UbiE (250 aa).

S-adenosyl-L-methionine is bound by residues Thr73, Asp94, and 122–123; that span reads DA.

The protein belongs to the class I-like SAM-binding methyltransferase superfamily. MenG/UbiE family.

It catalyses the reaction a 2-demethylmenaquinol + S-adenosyl-L-methionine = a menaquinol + S-adenosyl-L-homocysteine + H(+). The enzyme catalyses a 2-methoxy-6-(all-trans-polyprenyl)benzene-1,4-diol + S-adenosyl-L-methionine = a 5-methoxy-2-methyl-3-(all-trans-polyprenyl)benzene-1,4-diol + S-adenosyl-L-homocysteine + H(+). The protein operates within quinol/quinone metabolism; menaquinone biosynthesis; menaquinol from 1,4-dihydroxy-2-naphthoate: step 2/2. It functions in the pathway cofactor biosynthesis; ubiquinone biosynthesis. In terms of biological role, methyltransferase required for the conversion of demethylmenaquinol (DMKH2) to menaquinol (MKH2) and the conversion of 2-polyprenyl-6-methoxy-1,4-benzoquinol (DDMQH2) to 2-polyprenyl-3-methyl-6-methoxy-1,4-benzoquinol (DMQH2). The chain is Ubiquinone/menaquinone biosynthesis C-methyltransferase UbiE from Coxiella burnetii (strain RSA 331 / Henzerling II).